Here is a 491-residue protein sequence, read N- to C-terminus: Nicotinamide phosphoribosyltransferase (491 aa).

Position 1 is an N-acetylmethionine (Met1). At Tyr188 the chain carries Phosphotyrosine. Arg196 is a binding site for diphosphate. Asp219 contributes to the beta-nicotinamide D-ribonucleotide binding site. His247 and Arg311 together coordinate diphosphate. Beta-nicotinamide D-ribonucleotide contacts are provided by residues 311-313, 353-354, Gly384, and Arg392; these read RPD and GD. The residue at position 472 (Ser472) is a Phosphoserine.

The protein belongs to the NAPRTase family. Homodimer.

It localises to the nucleus. Its subcellular location is the cytoplasm. The protein resides in the secreted. It carries out the reaction beta-nicotinamide D-ribonucleotide + diphosphate = 5-phospho-alpha-D-ribose 1-diphosphate + nicotinamide + H(+). The protein operates within cofactor biosynthesis; NAD(+) biosynthesis; nicotinamide D-ribonucleotide from 5-phospho-alpha-D-ribose 1-diphosphate and nicotinamide: step 1/1. Catalyzes the condensation of nicotinamide with 5-phosphoribosyl-1-pyrophosphate to yield nicotinamide mononucleotide, an intermediate in the biosynthesis of NAD. It is the rate limiting component in the mammalian NAD biosynthesis pathway. The secreted form behaves both as a cytokine with immunomodulating properties and an adipokine with anti-diabetic properties, it has no enzymatic activity, partly because of lack of activation by ATP, which has a low level in extracellular space and plasma. Plays a role in the modulation of circadian clock function. Plays a role in the modulation of circadian clock function. NAMPT-dependent oscillatory production of NAD regulates oscillation of clock target gene expression by releasing the core clock component: CLOCK-BMAL1 heterodimer from NAD-dependent SIRT1-mediated suppression. This Sus scrofa (Pig) protein is Nicotinamide phosphoribosyltransferase (NAMPT).